We begin with the raw amino-acid sequence, 209 residues long: ATP phosphoribosyltransferase (209 aa).

This sequence belongs to the ATP phosphoribosyltransferase family. Short subfamily. Heteromultimer composed of HisG and HisZ subunits.

The protein resides in the cytoplasm. It carries out the reaction 1-(5-phospho-beta-D-ribosyl)-ATP + diphosphate = 5-phospho-alpha-D-ribose 1-diphosphate + ATP. The protein operates within amino-acid biosynthesis; L-histidine biosynthesis; L-histidine from 5-phospho-alpha-D-ribose 1-diphosphate: step 1/9. Catalyzes the condensation of ATP and 5-phosphoribose 1-diphosphate to form N'-(5'-phosphoribosyl)-ATP (PR-ATP). Has a crucial role in the pathway because the rate of histidine biosynthesis seems to be controlled primarily by regulation of HisG enzymatic activity. The chain is ATP phosphoribosyltransferase from Sulfurimonas denitrificans (strain ATCC 33889 / DSM 1251) (Thiomicrospira denitrificans (strain ATCC 33889 / DSM 1251)).